Reading from the N-terminus, the 696-residue chain is Rho-related BTB domain-containing protein 1 (696 aa).

Residues 1–210 form a rho-like region; the sequence is MDADMDYERP…DNAIRAALIS (210 aa). Residues 21–28, 84–88, and 140–143 contribute to the GTP site; these read GDNAVGKT, DTFGD, and CQLD. 2 consecutive BTB domains span residues 266–427 and 485–552; these read ADVL…DEKE and SDVT…SPNL. The segment at 327–348 is disordered; it reads VDPEEEREEGPPRIPQADQWKS.

The protein belongs to the small GTPase superfamily. Rho family. As to expression, ubiquitous, with highest levels in skeletal muscle, placenta, testis, stomach, and kidney, followed by uterus and adrenal gland. Expressed in a variety of fetal tissues.

This chain is Rho-related BTB domain-containing protein 1 (RHOBTB1), found in Homo sapiens (Human).